The sequence spans 168 residues: Endoribonuclease YbeY (168 aa).

3 residues coordinate Zn(2+): His127, His131, and His137.

The protein belongs to the endoribonuclease YbeY family. It depends on Zn(2+) as a cofactor.

Its subcellular location is the cytoplasm. Single strand-specific metallo-endoribonuclease involved in late-stage 70S ribosome quality control and in maturation of the 3' terminus of the 16S rRNA. In Chromobacterium violaceum (strain ATCC 12472 / DSM 30191 / JCM 1249 / CCUG 213 / NBRC 12614 / NCIMB 9131 / NCTC 9757 / MK), this protein is Endoribonuclease YbeY.